The sequence spans 159 residues: Neuroglobin-2 (159 aa).

One can recognise a Globin domain in the interval 3–151 (KLTEKDKELI…VVAAMSRGWA (149 aa)). Residues H66 and H98 each contribute to the heme b site.

It belongs to the globin family. In terms of assembly, monomer. Homodimers and homotetramers. Mainly monomeric but also detected as part of homodimers and homotetramers.

It localises to the cytoplasm. The protein resides in the cytosol. Its subcellular location is the mitochondrion matrix. The catalysed reaction is Fe(III)-heme b-[protein] + nitric oxide + H2O = Fe(II)-heme b-[protein] + nitrite + 2 H(+). Its function is as follows. Monomeric globin with a bis-histidyl six-coordinate heme-iron atom through which it can bind dioxygen, carbon monoxide and nitric oxide. Could help transport oxygen and increase its availability to the metabolically active neuronal tissues, though its low quantity in tissues as well as its high affinity for dioxygen, which may limit its oxygen-releasing ability, argue against it. The ferrous/deoxygenated form exhibits a nitrite reductase activity and it could produce nitric oxide which in turn inhibits cellular respiration in response to hypoxia. In its ferrous/deoxygenated state, it may also exhibit GDI (Guanine nucleotide Dissociation Inhibitor) activity toward heterotrimeric G-alpha proteins, thereby regulating signal transduction to facilitate neuroprotective responses in the wake of hypoxia and associated oxidative stress. The sequence is that of Neuroglobin-2 (ngb2) from Oncorhynchus mykiss (Rainbow trout).